The chain runs to 61 residues: Short neurotoxin 1 (61 aa).

4 disulfides stabilise this stretch: cysteine 3-cysteine 23, cysteine 17-cysteine 40, cysteine 42-cysteine 53, and cysteine 54-cysteine 59.

The protein belongs to the three-finger toxin family. Short-chain subfamily. Type I alpha-neurotoxin sub-subfamily. In terms of tissue distribution, expressed by the venom gland.

It localises to the secreted. Binds to muscle nicotinic acetylcholine receptor (nAChR) and inhibit acetylcholine from binding to the receptor, thereby impairing neuromuscular transmission. In terms of biological role, produces peripheral paralysis by blocking neuromuscular transmission at the postsynaptic site. Binds to the muscular nicotinic acetylcholine receptor. In Naja annulifera (Banded Egyptian cobra), this protein is Short neurotoxin 1.